The following is a 66-amino-acid chain: Alpha-conotoxin-like Tx2 (66 aa).

Residues 1-21 form the signal peptide; it reads MGMRMMFTVFLLVVLATTVVS. The propeptide occupies 22-49; sequence FTSGRRTFHGRNAAAKASGLVSLTDRRP. 2 disulfides stabilise this stretch: cysteine 51–cysteine 57 and cysteine 52–cysteine 65. The ser-Xaa-Pro motif, crucial for potent interaction with nAChR stretch occupies residues 53-55; sequence SHP.

This sequence belongs to the conotoxin A superfamily. In terms of tissue distribution, expressed by the venom duct.

It localises to the secreted. Its function is as follows. Alpha-conotoxins act on postsynaptic membranes, they bind to the nicotinic acetylcholine receptors (nAChR) and thus inhibit them. This is Alpha-conotoxin-like Tx2 from Conus textile (Cloth-of-gold cone).